The chain runs to 668 residues: Potassium voltage-gated channel subfamily KQT member 1 (668 aa).

Over 1 to 119 (MDTASSPPSA…YNFLERPTGW (119 aa)) the chain is Cytoplasmic. Ser27 carries the phosphoserine; by PKA modification. The chain crosses the membrane as a helical span at residues 120–141 (KCFVYHFTVFLIVLVCLIFSVL). Over 142-152 (STIEQYAALAT) the chain is Extracellular. Residues 153-175 (GTLFWMEIVLVVFFGTEYVVRLW) form a helical membrane-spanning segment. Over 176–191 (SAGCRSKYVGIWGRLR) the chain is Cytoplasmic. Residues 192–217 (FARKPISIIDLIVVVASMVVLCVGSK) form a helical membrane-spanning segment. The Extracellular portion of the chain corresponds to 218–225 (GQVFATSA). The helical; Voltage-sensor transmembrane segment at 226–241 (IRGIRFLQILRMLHVD) threads the bilayer. The tract at residues 237–245 (MLHVDRQGG) is interaction with KCNE3. Over 242–259 (RQGGTWRLLGSVVFIHRQ) the chain is Cytoplasmic. Gln243 lines the a 1,2-diacyl-sn-glycero-3-phospho-(1D-myo-inositol-4,5-bisphosphate) pocket. Residues 260–282 (ELITTLYIGFLGLIFSSYFVYLA) form a helical membrane-spanning segment. Residues 283-298 (EKDAVNESGRIEFGSY) are Extracellular-facing. N-linked (GlcNAc...) asparagine glycosylation occurs at Asn288. Residues 299–319 (ADALWWGVVTVTTIGYGDKVP) constitute an intramembrane region (pore-forming). The Extracellular portion of the chain corresponds to 320-321 (QT). The helical transmembrane segment at 322–347 (WVGKTIASCFSVFAISFFALPAGILG) threads the bilayer. Topologically, residues 348 to 668 (SGFALKVQQK…VPQTGPDEGS (321 aa)) are cytoplasmic. The segment at 369 to 381 (AAASLIQTAWRCY) is interaction with CALM. Phosphoserine is present on residues Ser406 and Ser408. Residues 514–528 (KVIRRMQYFVAKKKF) are interaction with CALM; calcium-dependent. Residues 534–571 (PYDVRDVIEQYSQGHLNLMVRIKELQRRLDQSIGKPSL) form an interaction with KCNE1 C-terminus region. Positions 584–620 (SNTIGARLNRVEDKVTQLDQRLVIITDMLHQLLSMQQ) form a coiled coil. The interaction with AKAP9 stretch occupies residues 587 to 615 (IGARLNRVEDKVTQLDQRLVIITDMLHQL). Residues 588-619 (GARLNRVEDKVTQLDQRLVIITDMLHQLLSMQ) are C-terminal assembly domain (tetramerization).

It belongs to the potassium channel family. KQT (TC 1.A.1.15) subfamily. Kv7.1/KCNQ1 sub-subfamily. As to quaternary structure, tetramer. Heterotetramer with KCNE1; form the native cardiac channel I(Ks) which increases the amplitude and slows down the activation kinetics of outward potassium current and targets to the membrane raft. Interacts (via C-terminus) with CALM; forms a heterooctameric structure (with 4:4 KCNQ1:CALM stoichiometry) in a calcium-independent manner. Interacts with AKAP9; targets protein kinase A (PKA) catalytic and regulatory subunits and protein phosphatase 1 (PP1) to the KCNQ1-KCNE1 complex, allowing PKA-mediated phosphorylation and increase of delayed rectifier potassium channel activity. Interacts with KCNE2; form an heterooligomer complex that targets to the membrane raft and leading to currents with an apparently instantaneous activation, a rapid deactivation process and a linear current-voltage relationship and decreases the amplitude of the outward current. Interacts with AP2M1; mediates estrogen-induced internalization via clathrin-coated vesicles. Interacts with NEDD4L; promotes internalization and decreases I(Ks) currents. Interacts with USP2; counteracts the NEDD4L-specific down-regulation of I(Ks) and restore plasma membrane localization. Heterotetramer with KCNQ5; has a voltage-gated potassium channel activity. Interacts with KCNE3; four KCNE3 molecules are bound to one KCNQ1 tetramer (4:4 KCNQ1:KCNE3 stoichiometry); alters membrane raft localization; affects KCNQ1 structure and gating properties. Interacts with KCNE4; impairs KCNQ1 localization in lipid rafts and inhibits voltage-gated potassium channel activity. Interacts with KCNE5; impairs KCNQ1 localization in lipid rafts and only conducts current upon strong and continued depolarization. Interacts with SLC5A3; forms coregulatory channel-transporter complexes that modulate Na(+)-coupled myo-inositol influx through the transporter. Phosphorylation at Ser-27 by PKA; increases delayed rectifier potassium channel activity of the KCNQ1-KCNE1 complex through a macromolecular complex that includes PKA, PP1, and the targeting protein AKAP9. Post-translationally, ubiquitinated by NEDD4L; promotes internalization. The ubiquitinylated form is internalized through a clathrin-mediated endocytosis by interacting with AP2M1 and is recycled back to the cell membrane via RAB4A and RAB11A. In terms of processing, deubiquitinated by USP2; counteracts the NEDD4L-specific down-regulation of I(Ks) and restores the membrane localization. As to expression, expressed in heart, kidney and salivary glands. Detected in the cochlea. Almost undetectable in brain, skeletal muscle and liver. Widely expressed in embryonic and neonatal tissues. Expressed in choroid plexus epithelium (at protein level).

The protein resides in the cell membrane. It localises to the cytoplasmic vesicle membrane. Its subcellular location is the early endosome. The protein localises to the membrane raft. It is found in the endoplasmic reticulum. The protein resides in the basolateral cell membrane. It localises to the apical cell membrane. The catalysed reaction is K(+)(in) = K(+)(out). PIP2 molecule is essential to activate KCNQ channels by inducing the coupling of the voltage-sensing domain (VSD) and the pore-forming domain (PD). Upon channel activation, PIP2 disrupts the VSD-calmodulin/CALM interactions, causing the release of CALM from the VSD which triggers the opening of the gate. Calcium potentiates KCNQ1 channel current through calcium-bound CALM. Calcium-bound CALM competes with PIP2 to stabilize the channel open state. Pore-forming subunit of the voltage-gated potassium (Kv) channel involved in the regulation of cardiomyocyte excitability and important in normal development and functions of myocardium, inner ear, stomach and colon. Associates with KCNE beta subunits that modulates current kinetics. Induces a voltage-dependent by rapidly activating and slowly deactivating potassium-selective outward current. Also promotes a delayed voltage activated potassium current showing outward rectification characteristic. During beta-adrenergic receptor stimulation participates in cardiac increases the amplitude and slows down the activation kinetics of outward potassium current I(Ks). Muscarinic agonist oxotremorine-M strongly suppresses KCNQ1/KCNE1 current. When associated with KCNE3, forms the potassium channel that is important for cyclic AMP-stimulated intestinal secretion of chloride ions. This interaction with KCNE3 is reduced by 17beta-estradiol, resulting in the reduction of currents. During conditions of increased substrate load, maintains the driving force for proximal tubular and intestinal sodium ions absorption, gastric acid secretion, and cAMP-induced jejunal chloride ions secretion. Allows the provision of potassium ions to the luminal membrane of the secretory canaliculus in the resting state as well as during stimulated acid secretion. When associated with KCNE2, forms a heterooligomer complex leading to currents with an apparently instantaneous activation, a rapid deactivation process and a linear current-voltage relationship and decreases the amplitude of the outward current. When associated with KCNE4, inhibits voltage-gated potassium channel activity. When associated with KCNE5, this complex only conducts current upon strong and continued depolarization. Also forms a heterotetramer with KCNQ5; has a voltage-gated potassium channel activity. Binds with phosphatidylinositol 4,5-bisphosphate. KCNQ1-KCNE2 channel associates with Na(+)-coupled myo-inositol symporter in the apical membrane of choroid plexus epithelium and regulates the myo-inositol gradient between blood and cerebrospinal fluid with an impact on neuron excitability. In Mus musculus (Mouse), this protein is Potassium voltage-gated channel subfamily KQT member 1.